We begin with the raw amino-acid sequence, 148 residues long: MSSSKRIAKELSDLGRDPPASCSAGPVGDDLYHWQASIMGPSDSPYAGGVFFLSIHFPTDYPFKPPKVNFTTKIYHPNINSSGNICLDILKDQWSPALTLSKVLLSICSLLTDANPDDPLVPEIAQIYKTDKAKYEATAKEWTKKYAV.

A UBC core domain is found at 2–148 (SSSKRIAKEL…AKEWTKKYAV (147 aa)). Residue serine 12 is modified to Phosphoserine. The active-site Glycyl thioester intermediate is the cysteine 86. Residue lysine 91 forms a Glycyl lysine isopeptide (Lys-Gly) (interchain with G-Cter in ubiquitin) linkage.

Belongs to the ubiquitin-conjugating enzyme family. Component of the RSP5-UBA1-UBC5 ubiquitin ligase complex composed of E3 RSP5, E1 UBA1 and E2 UBC5. Post-translationally, the N-terminus is blocked.

The catalysed reaction is S-ubiquitinyl-[E1 ubiquitin-activating enzyme]-L-cysteine + [E2 ubiquitin-conjugating enzyme]-L-cysteine = [E1 ubiquitin-activating enzyme]-L-cysteine + S-ubiquitinyl-[E2 ubiquitin-conjugating enzyme]-L-cysteine.. The protein operates within protein modification; protein ubiquitination. Functionally, catalyzes the covalent attachment of ubiquitin to other proteins. Mediates the selective degradation of short-lived and abnormal proteins. The RSP5-UBA1-UBC5 ubiquitin ligase complex ubiquitinates RPO21 forming 'Lys-63'-linked polyubiquitin chains. The protein is Ubiquitin-conjugating enzyme E2-16 kDa (UBC5) of Saccharomyces cerevisiae (strain ATCC 204508 / S288c) (Baker's yeast).